The following is a 143-amino-acid chain: Acetyltransferase plu1384 (143 aa).

The region spanning 1–138 is the N-acetyltransferase domain; sequence MEIRVFRQDD…ESVIFSKRLI (138 aa).

Belongs to the acetyltransferase family. YpeA subfamily.

The chain is Acetyltransferase plu1384 from Photorhabdus laumondii subsp. laumondii (strain DSM 15139 / CIP 105565 / TT01) (Photorhabdus luminescens subsp. laumondii).